Reading from the N-terminus, the 174-residue chain is Urease accessory protein UreE (174 aa).

The protein belongs to the UreE family.

It is found in the cytoplasm. Involved in urease metallocenter assembly. Binds nickel. Probably functions as a nickel donor during metallocenter assembly. The sequence is that of Urease accessory protein UreE from Helicobacter hepaticus (strain ATCC 51449 / 3B1).